We begin with the raw amino-acid sequence, 1825 residues long: Proteasome activator complex subunit 4B (1825 aa).

HEAT repeat units lie at residues 458–502 (PEGP…LVDC), 981–1020 (NFCCRDITPRVLEFLEPTRTDVTQQQFKGALYCLLGNHCG), 1162–1200 (YPLPAPAVFFFVQSLNHDALVVRKMAIAAVAGILKQLKR), 1336–1374 (DAFLPVLKPHMERLANDSHESTQRCVAEIIAGLIRGSKH), 1618–1656 (PEQIPMVLAVLHEIAGSSSWHARYSVLTYLQTMVFYNLF), and 1662–1700 (EQCVQGVRALVIRLLEDEQLEVREMAATTLSGFLQCNFL). A bromodomain-like (BRDL) region spans residues 1632 to 1720 (AGSSSWHARY…EALCKTRLPK (89 aa)).

Belongs to the BLM10 family. In terms of assembly, homodimer. Interacts with the 20S and 26S proteasomes.

It localises to the cytoplasm. The protein resides in the cytosol. It is found in the nucleus. Its subcellular location is the nucleus speckle. Its function is as follows. Associated component of the proteasome that specifically recognizes acetylated histones and promotes ATP- and ubiquitin-independent degradation of core histones during DNA damage response. Recognizes and binds acetylated histones via its bromodomain-like (BRDL) region and activates the proteasome by opening the gated channel for substrate entry. Binds to the core proteasome via its C-terminus, which occupies the same binding sites as the proteasomal ATPases, opening the closed structure of the proteasome via an active gating mechanism. involved in DNA damage response in somatic cells: binds to acetylated histones and promotes degradation of histones. The sequence is that of Proteasome activator complex subunit 4B (psme4b) from Danio rerio (Zebrafish).